We begin with the raw amino-acid sequence, 170 residues long: Cytochrome c-type biogenesis protein CcmE (170 aa).

Residues Met-1 to Arg-7 are Cytoplasmic-facing. A helical; Signal-anchor for type II membrane protein transmembrane segment spans residues Leu-8–Ala-28. The Periplasmic portion of the chain corresponds to Leu-29–Gln-170. Positions 122 and 126 each coordinate heme. A compositionally biased stretch (basic and acidic residues) spans Lys-137 to Gly-146. A disordered region spans residues Lys-137–Gln-170.

This sequence belongs to the CcmE/CycJ family.

It is found in the cell inner membrane. Functionally, heme chaperone required for the biogenesis of c-type cytochromes. Transiently binds heme delivered by CcmC and transfers the heme to apo-cytochromes in a process facilitated by CcmF and CcmH. This is Cytochrome c-type biogenesis protein CcmE from Bradyrhizobium sp. (strain BTAi1 / ATCC BAA-1182).